A 366-amino-acid polypeptide reads, in one-letter code: Galactoside alpha-(1,2)-fucosyltransferase 1 (366 aa).

Residues 1-8 (MWPPSHRQ) lie on the Cytoplasmic side of the membrane. Residues 9-25 (LCLAFLLVCVLSVISFF) traverse the membrane as a helical; Signal-anchor for type II membrane protein segment. The Lumenal segment spans residues 26–366 (LHIHQDSFPH…LSSLWTLAKP (341 aa)). Asparagine 66, asparagine 302, and asparagine 328 each carry an N-linked (GlcNAc...) asparagine glycan.

Belongs to the glycosyltransferase 11 family.

The protein localises to the golgi apparatus. It is found in the golgi stack membrane. It catalyses the reaction a beta-D-galactosyl-(1-&gt;4)-N-acetyl-beta-D-glucosaminyl derivative + GDP-beta-L-fucose = an alpha-L-Fuc-(1-&gt;2)-beta-D-Gal-(1-&gt;4)-beta-D-GlcNAc derivative + GDP + H(+). The catalysed reaction is a ganglioside GA1 + GDP-beta-L-fucose = a ganglioside Fuc-GA1 + GDP + H(+). It carries out the reaction a beta-D-Gal-(1-&gt;3)-beta-D-GlcNAc-(1-&gt;3)-beta-D-Gal-(1-&gt;4)-beta-D-Glc-(1&lt;-&gt;1')-Cer(d18:1(4E)) + GDP-beta-L-fucose = alpha-L-fucosyl-(1-&gt;2)- beta-D-galactosyl-(1-&gt;3)-N-acetyl-beta-D-glucosaminyl-(1-&gt;3)-beta-D-galactosyl-(1-&gt;4)-beta-D-glucosyl-(1&lt;-&gt;1')-N-acylsphing-4-enine + GDP + H(+). The enzyme catalyses a neolactoside nLc4Cer(d18:1(4E)) + GDP-beta-L-fucose = a neolactoside IV(2)-alpha-Fuc-nLc4Cer(d18:1(4E)) + GDP + H(+). It catalyses the reaction a ganglioside GM1 + GDP-beta-L-fucose = a ganglioside Fuc-GM1 + GDP + H(+). The catalysed reaction is beta-D-galactosyl-(1-&gt;3)-N-acetyl-D-galactosamine + GDP-beta-L-fucose = alpha-L-fucosyl-(1-&gt;2)-beta-D-galactosyl-(1-&gt;3)-N-acetyl-D-galactosamine + GDP + H(+). Its pathway is protein modification; protein glycosylation. In terms of biological role, catalyzes the transfer of L-fucose, from a guanosine diphosphate-beta-L-fucose, to the terminal galactose residue of glycoconjugates through an alpha(1,2) linkage leading to H antigen synthesis that is an intermediate substrate in the synthesis of ABO blood group antigens. H antigen is essential for maturation of the glomerular layer of the main olfactory bulb, in cell migration and early cell-cell contacts during tumor associated angiogenesis. Preferentially fucosylates soluble lactose and to a lesser extent fucosylates glycolipids gangliosides GA1 and GM1a. The chain is Galactoside alpha-(1,2)-fucosyltransferase 1 from Pan troglodytes (Chimpanzee).